The primary structure comprises 430 residues: Phosphomethylpyrimidine synthase (430 aa).

Substrate is bound by residues Asn-67, Met-96, Tyr-125, His-161, 183-185 (SRG), 224-227 (DALR), and Glu-263. Residue His-267 participates in Zn(2+) binding. Tyr-290 contacts substrate. Residue His-331 participates in Zn(2+) binding. Cys-406, Cys-409, and Cys-413 together coordinate [4Fe-4S] cluster.

Belongs to the ThiC family. In terms of assembly, homodimer. [4Fe-4S] cluster is required as a cofactor.

The enzyme catalyses 5-amino-1-(5-phospho-beta-D-ribosyl)imidazole + S-adenosyl-L-methionine = 4-amino-2-methyl-5-(phosphooxymethyl)pyrimidine + CO + 5'-deoxyadenosine + formate + L-methionine + 3 H(+). It participates in cofactor biosynthesis; thiamine diphosphate biosynthesis. Catalyzes the synthesis of the hydroxymethylpyrimidine phosphate (HMP-P) moiety of thiamine from aminoimidazole ribotide (AIR) in a radical S-adenosyl-L-methionine (SAM)-dependent reaction. The protein is Phosphomethylpyrimidine synthase of Campylobacter jejuni subsp. jejuni serotype O:2 (strain ATCC 700819 / NCTC 11168).